The sequence spans 218 residues: Probable nicotinate-nucleotide adenylyltransferase (218 aa).

Belongs to the NadD family.

The catalysed reaction is nicotinate beta-D-ribonucleotide + ATP + H(+) = deamido-NAD(+) + diphosphate. The protein operates within cofactor biosynthesis; NAD(+) biosynthesis; deamido-NAD(+) from nicotinate D-ribonucleotide: step 1/1. In terms of biological role, catalyzes the reversible adenylation of nicotinate mononucleotide (NaMN) to nicotinic acid adenine dinucleotide (NaAD). This Halorhodospira halophila (strain DSM 244 / SL1) (Ectothiorhodospira halophila (strain DSM 244 / SL1)) protein is Probable nicotinate-nucleotide adenylyltransferase.